A 210-amino-acid polypeptide reads, in one-letter code: uncharacterized protein (210 aa).

5 positions are modified to phosphoserine: Ser-18, Ser-39, Ser-41, Ser-57, and Ser-60. Positions 33–46 (LDLDQRSMSPSNIA) are enriched in polar residues. The disordered stretch occupies residues 33 to 58 (LDLDQRSMSPSNIASGEDRITRTNSG). Disordered regions lie at residues 100–139 (YDHNNGTKSPTPKTSNMVDPKNKKKNKKKKNDKDDKYKVS) and 177–210 (DSAPLDNANYPLSDHSPSLNSMDNTTKHSSNVHT). The span at 102–116 (HNNGTKSPTPKTSNM) shows a compositional bias: polar residues. A compositionally biased stretch (basic and acidic residues) spans 130–139 (NDKDDKYKVS). Phosphoserine is present on residues Ser-178, Ser-189, and Ser-192. Residues 191-210 (HSPSLNSMDNTTKHSSNVHT) are compositionally biased toward polar residues.

This is an uncharacterized protein from Saccharomyces cerevisiae (strain ATCC 204508 / S288c) (Baker's yeast).